Consider the following 266-residue polypeptide: Putative carbamate hydrolase RutD (266 aa).

Belongs to the AB hydrolase superfamily. Hydrolase RutD family.

The enzyme catalyses carbamate + 2 H(+) = NH4(+) + CO2. Its function is as follows. Involved in pyrimidine catabolism. May facilitate the hydrolysis of carbamate, a reaction that can also occur spontaneously. This is Putative carbamate hydrolase RutD from Escherichia coli O45:K1 (strain S88 / ExPEC).